We begin with the raw amino-acid sequence, 28 residues long: Short cationic peptide-1c (28 aa).

At E28 the chain carries Glutamic acid 1-amide.

As to expression, expressed by the venom gland.

The protein resides in the secreted. This is Short cationic peptide-1c from Cupiennius salei (American wandering spider).